The chain runs to 263 residues: Hydroxyacylglutathione hydrolase (263 aa).

His55, His57, Asp59, His60, His117, Asp134, and His172 together coordinate Zn(2+).

This sequence belongs to the metallo-beta-lactamase superfamily. Glyoxalase II family. In terms of assembly, monomer. Zn(2+) is required as a cofactor.

The catalysed reaction is an S-(2-hydroxyacyl)glutathione + H2O = a 2-hydroxy carboxylate + glutathione + H(+). It participates in secondary metabolite metabolism; methylglyoxal degradation; (R)-lactate from methylglyoxal: step 2/2. Functionally, thiolesterase that catalyzes the hydrolysis of S-D-lactoyl-glutathione to form glutathione and D-lactic acid. The sequence is that of Hydroxyacylglutathione hydrolase from Shewanella baltica (strain OS185).